A 450-amino-acid chain; its full sequence is Tubulin alpha-1 chain (450 aa).

GTP-binding residues include Gln11, Glu71, Gly144, Thr145, Thr179, Asn206, and Asn228. Residue Glu71 coordinates Mg(2+). Glu254 is an active-site residue.

It belongs to the tubulin family. As to quaternary structure, dimer of alpha and beta chains. A typical microtubule is a hollow water-filled tube with an outer diameter of 25 nm and an inner diameter of 15 nM. Alpha-beta heterodimers associate head-to-tail to form protofilaments running lengthwise along the microtubule wall with the beta-tubulin subunit facing the microtubule plus end conferring a structural polarity. Microtubules usually have 13 protofilaments but different protofilament numbers can be found in some organisms and specialized cells. Mg(2+) is required as a cofactor. Post-translationally, undergoes a tyrosination/detyrosination cycle, the cyclic removal and re-addition of a C-terminal tyrosine residue by the enzymes tubulin tyrosine carboxypeptidase (TTCP) and tubulin tyrosine ligase (TTL), respectively.

It is found in the cytoplasm. It localises to the cytoskeleton. The catalysed reaction is GTP + H2O = GDP + phosphate + H(+). Functionally, tubulin is the major constituent of microtubules, a cylinder consisting of laterally associated linear protofilaments composed of alpha- and beta-tubulin heterodimers. Microtubules grow by the addition of GTP-tubulin dimers to the microtubule end, where a stabilizing cap forms. Below the cap, tubulin dimers are in GDP-bound state, owing to GTPase activity of alpha-tubulin. In Oryza sativa subsp. japonica (Rice), this protein is Tubulin alpha-1 chain (TUBA1).